Here is a 245-residue protein sequence, read N- to C-terminus: tRNA (guanine-N(1)-)-methyltransferase (245 aa).

S-adenosyl-L-methionine is bound by residues Gly-112 and 132 to 137 (IGDFVL).

It belongs to the RNA methyltransferase TrmD family. As to quaternary structure, homodimer.

It is found in the cytoplasm. The catalysed reaction is guanosine(37) in tRNA + S-adenosyl-L-methionine = N(1)-methylguanosine(37) in tRNA + S-adenosyl-L-homocysteine + H(+). Functionally, specifically methylates guanosine-37 in various tRNAs. The sequence is that of tRNA (guanine-N(1)-)-methyltransferase from Geobacter metallireducens (strain ATCC 53774 / DSM 7210 / GS-15).